The chain runs to 274 residues: Thiazole synthase (274 aa).

The active-site Schiff-base intermediate with DXP is lysine 111. Residues glycine 172, 198–199 (AG), and 220–221 (NT) each bind 1-deoxy-D-xylulose 5-phosphate.

This sequence belongs to the ThiG family. Homotetramer. Forms heterodimers with either ThiH or ThiS.

The protein resides in the cytoplasm. It carries out the reaction [ThiS sulfur-carrier protein]-C-terminal-Gly-aminoethanethioate + 2-iminoacetate + 1-deoxy-D-xylulose 5-phosphate = [ThiS sulfur-carrier protein]-C-terminal Gly-Gly + 2-[(2R,5Z)-2-carboxy-4-methylthiazol-5(2H)-ylidene]ethyl phosphate + 2 H2O + H(+). Its pathway is cofactor biosynthesis; thiamine diphosphate biosynthesis. In terms of biological role, catalyzes the rearrangement of 1-deoxy-D-xylulose 5-phosphate (DXP) to produce the thiazole phosphate moiety of thiamine. Sulfur is provided by the thiocarboxylate moiety of the carrier protein ThiS. In vitro, sulfur can be provided by H(2)S. The chain is Thiazole synthase from Gloeobacter violaceus (strain ATCC 29082 / PCC 7421).